Consider the following 327-residue polypeptide: Phenylalanine--tRNA ligase alpha subunit (327 aa).

Glu-252 contacts Mg(2+).

This sequence belongs to the class-II aminoacyl-tRNA synthetase family. Phe-tRNA synthetase alpha subunit type 1 subfamily. Tetramer of two alpha and two beta subunits. Mg(2+) serves as cofactor.

Its subcellular location is the cytoplasm. The enzyme catalyses tRNA(Phe) + L-phenylalanine + ATP = L-phenylalanyl-tRNA(Phe) + AMP + diphosphate + H(+). This chain is Phenylalanine--tRNA ligase alpha subunit, found in Shewanella frigidimarina (strain NCIMB 400).